Reading from the N-terminus, the 406-residue chain is Suppressor protein SRP40 (406 aa).

Residues 1–25 are compositionally biased toward basic and acidic residues; that stretch reads MASKKIKVDEVPKLSVKEKEIEEKS. A disordered region spans residues 1–335; sequence MASKKIKVDE…EIKEGQRKHF (335 aa). Residues 26–115 are compositionally biased toward low complexity; sequence SSSSSSSSSS…SSSSSSSSDE (90 aa). Over residues 125–148 the composition is skewed to basic and acidic residues; that stretch reads ETKKRARESDNEDAKETKKAKTEP. S133 carries the post-translational modification Phosphoserine. Low complexity-rich tracts occupy residues 149–168, 176–186, 194–233, and 243–268; these read ESSSSSESSSSGSSSSSESE, DSSSSSSSSSD, DSQSSSSSSSSDSSSDSDSSSSDSSSDSDSSSSSSSSSSD, and DSDSSGSSDSSSSSDSSSDESTSSDS. Residues 283-297 show a composition bias toward basic and acidic residues; sequence LETKEATADESKAEE. Residue T289 is modified to Phosphothreonine. Position 293 is a phosphoserine (S293). Positions 298–316 are enriched in low complexity; the sequence is TPASSNESTPSASSSSSAN. Basic and acidic residues predominate over residues 325–335; that stretch reads DEIKEGQRKHF. S394 is modified (phosphoserine).

Pyrophosphorylated by 5-diphosphoinositol pentakisphosphate (5-IP7). Serine pyrophosphorylation is achieved by Mg(2+)-dependent, but enzyme independent transfer of a beta-phosphate from a inositol pyrophosphate to a pre-phosphorylated serine residue.

Functionally, not known; weak suppressor of a mutant of the subunit AC40 of DNA dependent RNA polymerase I and III. In Saccharomyces cerevisiae (strain ATCC 204508 / S288c) (Baker's yeast), this protein is Suppressor protein SRP40 (SRP40).